We begin with the raw amino-acid sequence, 368 residues long: 1-deoxy-D-xylulose 5-phosphate reductoisomerase (368 aa).

Residues Thr7, Gly8, Ser9, Ile10, Gly31, Lys32, Asn33, and Asn113 each coordinate NADPH. Lys114 serves as a coordination point for 1-deoxy-D-xylulose 5-phosphate. Position 115 (Glu115) interacts with NADPH. Asp133 is a Mn(2+) binding site. Residues Ser134, Glu135, Ser158, and His181 each coordinate 1-deoxy-D-xylulose 5-phosphate. Glu135 contributes to the Mn(2+) binding site. An NADPH-binding site is contributed by Gly187. Ser194, Asn199, Lys200, and Glu203 together coordinate 1-deoxy-D-xylulose 5-phosphate. Glu203 provides a ligand contact to Mn(2+).

This sequence belongs to the DXR family. Requires Mg(2+) as cofactor. The cofactor is Mn(2+).

The catalysed reaction is 2-C-methyl-D-erythritol 4-phosphate + NADP(+) = 1-deoxy-D-xylulose 5-phosphate + NADPH + H(+). It participates in isoprenoid biosynthesis; isopentenyl diphosphate biosynthesis via DXP pathway; isopentenyl diphosphate from 1-deoxy-D-xylulose 5-phosphate: step 1/6. In terms of biological role, catalyzes the NADPH-dependent rearrangement and reduction of 1-deoxy-D-xylulose-5-phosphate (DXP) to 2-C-methyl-D-erythritol 4-phosphate (MEP). In Helicobacter pylori (strain P12), this protein is 1-deoxy-D-xylulose 5-phosphate reductoisomerase.